Reading from the N-terminus, the 847-residue chain is Collagen alpha-1(I) chain (847 aa).

The tract at residues 1–847 (GPMGPSGPRG…PGPIGPPGPR (847 aa)) is disordered. The segment covering 20–39 (PQGFQGPPGEPGEPGSSGPM) has biased composition (low complexity). A compositionally biased stretch (basic and acidic residues) spans 51–65 (NGDDGEAGKPGRPGE). Ser-85 is modified (phosphoserine). Low complexity-rich tracts occupy residues 93-109 (DAGPAGPKGEPGSPGEN) and 127-145 (PGASGPAGARGNDGATGAA). Residues 147–159 (PPGPTGPAGPPGF) are compositionally biased toward pro residues. 7 stretches are compositionally biased toward low complexity: residues 193-208 (AGAAGPAGNPGADGQP), 219-228 (QGPSGAPGPK), 298-314 (PKGITGSPGSPGPDGKT), 334-343 (PGPKGAAGEP), 500-543 (PSGP…KGDA), 551-599 (PTGA…NAGA), and 628-638 (SPGADGPAGAP). Ser-501 carries the phosphoserine modification. A compositionally biased stretch (pro residues) spans 685 to 695 (PPGPMGPPGIA). Residues 697–712 (PPGESGREGSPGAEGS) are compositionally biased toward low complexity. Positions 731–746 (SGPPGAPGAPGAPGPV) are enriched in pro residues. Residues 763-777 (AGPAGARGPSGPQGP) are compositionally biased toward low complexity. Residues 778–789 (RGDKGETGEQGD) are compositionally biased toward basic and acidic residues. Residues 793 to 838 (SGIQGPPGAPGSPGEQGPSGASGPAGPRGPPGSAGSPGKDGINGIP) show a composition bias toward low complexity.

It belongs to the fibrillar collagen family. As to quaternary structure, trimers of one alpha 2(I) and two alpha 1(I) chains. Post-translationally, prolines at the third position of the tripeptide repeating unit (G-X-Y) are hydroxylated in some or all of the chains. As to expression, forms the fibrils of tendon, ligaments and bones. In bones, the fibrils are mineralized with calcium hydroxyapatite.

Its subcellular location is the secreted. The protein resides in the extracellular space. The protein localises to the extracellular matrix. Functionally, type I collagen is a member of group I collagen (fibrillar forming collagen). This is Collagen alpha-1(I) chain from Cyclopes didactylus (Silky anteater).